The primary structure comprises 201 residues: Kunitz type trypsin inhibitor 104 (201 aa).

The first 24 residues, 1–24 (MSTRSLTIFILAHVWLLMATTSIA), serve as a signal peptide directing secretion. 3 disulfides stabilise this stretch: Cys-63–Cys-110, Cys-161–Cys-173, and Cys-166–Cys-169.

The protein belongs to the protease inhibitor I3 (leguminous Kunitz-type inhibitor) family. In terms of assembly, interacts with CP.

It localises to the secreted. Its subcellular location is the extracellular space. The protein resides in the apoplast. Functionally, protease inhibitor involved in the control of mycorrhiza establishment and arbuscule development during root colonization by arbuscular mycorrhizal (AM) fungi (e.g. Rhizophagus irregularis). This chain is Kunitz type trypsin inhibitor 104, found in Medicago truncatula (Barrel medic).